The sequence spans 548 residues: CTP synthase (548 aa).

Residues 1-266 form an amidoligase domain region; the sequence is MRVNYIFVTG…DNYICKRFNL (266 aa). S14 is a binding site for CTP. Residue S14 participates in UTP binding. Residues 15-20 and D72 each bind ATP; that span reads SLGKGI. Mg(2+) contacts are provided by D72 and E140. CTP is bound by residues 147-149, 187-192, and K223; these read DIE and KTKPTQ. UTP-binding positions include 187–192 and K223; that span reads KTKPTQ. Residues 291 to 543 enclose the Glutamine amidotransferase type-1 domain; it reads TVGMVGKYIE…IKAAIEYQHR (253 aa). Residue G353 coordinates L-glutamine. C380 acts as the Nucleophile; for glutamine hydrolysis in catalysis. L-glutamine contacts are provided by residues 381 to 384, E404, and R471; that span reads LGMQ. Active-site residues include H516 and E518.

Belongs to the CTP synthase family. In terms of assembly, homotetramer.

The catalysed reaction is UTP + L-glutamine + ATP + H2O = CTP + L-glutamate + ADP + phosphate + 2 H(+). It carries out the reaction L-glutamine + H2O = L-glutamate + NH4(+). It catalyses the reaction UTP + NH4(+) + ATP = CTP + ADP + phosphate + 2 H(+). The protein operates within pyrimidine metabolism; CTP biosynthesis via de novo pathway; CTP from UDP: step 2/2. With respect to regulation, allosterically activated by GTP, when glutamine is the substrate; GTP has no effect on the reaction when ammonia is the substrate. The allosteric effector GTP functions by stabilizing the protein conformation that binds the tetrahedral intermediate(s) formed during glutamine hydrolysis. Inhibited by the product CTP, via allosteric rather than competitive inhibition. In terms of biological role, catalyzes the ATP-dependent amination of UTP to CTP with either L-glutamine or ammonia as the source of nitrogen. Regulates intracellular CTP levels through interactions with the four ribonucleotide triphosphates. The polypeptide is CTP synthase (Blochmanniella pennsylvanica (strain BPEN)).